Consider the following 238-residue polypeptide: 4-hydroxy-tetrahydrodipicolinate reductase (238 aa).

12–17 (GASGRM) contacts NAD(+). Residue Arg-40 coordinates NADP(+). Residues 93-95 (GTT) and 117-120 (ASNF) contribute to the NAD(+) site. The active-site Proton donor/acceptor is the His-149. His-150 contacts (S)-2,3,4,5-tetrahydrodipicolinate. Lys-153 acts as the Proton donor in catalysis. A (S)-2,3,4,5-tetrahydrodipicolinate-binding site is contributed by 159-160 (GT).

This sequence belongs to the DapB family.

It localises to the cytoplasm. It carries out the reaction (S)-2,3,4,5-tetrahydrodipicolinate + NAD(+) + H2O = (2S,4S)-4-hydroxy-2,3,4,5-tetrahydrodipicolinate + NADH + H(+). The enzyme catalyses (S)-2,3,4,5-tetrahydrodipicolinate + NADP(+) + H2O = (2S,4S)-4-hydroxy-2,3,4,5-tetrahydrodipicolinate + NADPH + H(+). It participates in amino-acid biosynthesis; L-lysine biosynthesis via DAP pathway; (S)-tetrahydrodipicolinate from L-aspartate: step 4/4. Catalyzes the conversion of 4-hydroxy-tetrahydrodipicolinate (HTPA) to tetrahydrodipicolinate. In Xanthomonas euvesicatoria pv. vesicatoria (strain 85-10) (Xanthomonas campestris pv. vesicatoria), this protein is 4-hydroxy-tetrahydrodipicolinate reductase.